Reading from the N-terminus, the 235-residue chain is Large ribosomal subunit protein uL1 (235 aa).

It belongs to the universal ribosomal protein uL1 family. As to quaternary structure, part of the 50S ribosomal subunit.

Binds directly to 23S rRNA. The L1 stalk is quite mobile in the ribosome, and is involved in E site tRNA release. In terms of biological role, protein L1 is also a translational repressor protein, it controls the translation of the L11 operon by binding to its mRNA. In Symbiobacterium thermophilum (strain DSM 24528 / JCM 14929 / IAM 14863 / T), this protein is Large ribosomal subunit protein uL1.